The following is a 230-amino-acid chain: Uracil-DNA glycosylase (230 aa).

The active-site Proton acceptor is Asp70.

It belongs to the uracil-DNA glycosylase (UDG) superfamily. UNG family.

It is found in the cytoplasm. The catalysed reaction is Hydrolyzes single-stranded DNA or mismatched double-stranded DNA and polynucleotides, releasing free uracil.. Functionally, excises uracil residues from the DNA which can arise as a result of misincorporation of dUMP residues by DNA polymerase or due to deamination of cytosine. This is Uracil-DNA glycosylase from Pseudomonas putida (strain GB-1).